The chain runs to 663 residues: Polyunsaturated fatty acid lipoxygenase ALOX12 (663 aa).

In terms of domain architecture, PLAT spans 2-114 (GRYRIRVATG…ILSLPEGTAR (113 aa)). One can recognise a Lipoxygenase domain in the interval 115 to 663 (LPGDNALDMF…PSCIENSVTI (549 aa)). Serine 246 carries the post-translational modification Phosphoserine. Residues histidine 360, histidine 365, histidine 540, asparagine 544, and isoleucine 663 each coordinate Fe cation.

It belongs to the lipoxygenase family. Requires Fe cation as cofactor. Expressed in vascular smooth muscle cells.

The protein localises to the cytoplasm. It localises to the cytosol. The protein resides in the membrane. The catalysed reaction is (5Z,8Z,11Z,14Z)-eicosatetraenoate + O2 = (12S)-hydroperoxy-(5Z,8Z,10E,14Z)-eicosatetraenoate. The enzyme catalyses (5Z,8Z,11Z,14Z)-eicosatetraenoate + O2 = (15S)-hydroperoxy-(5Z,8Z,11Z,13E)-eicosatetraenoate. It catalyses the reaction 2 leukotriene A4 + O2 + 2 H2O = 2 lipoxin A4. It carries out the reaction 2 leukotriene A4 + O2 + 2 H2O = 2 lipoxin B4. The catalysed reaction is (14S)-hydroperoxy-(4Z,7Z,10Z,12E,16Z,19Z)-docosahexaenoate = (13S,14S)-epoxy-(4Z,7Z,9E,11E,16Z,19Z)-docosahexaenoate + H2O. The enzyme catalyses N-(5Z,8Z,11Z,14Z)-eicosatetraenoyl-L-alanine + O2 = N-(15S)-hydroperoxy-(5Z,8Z,11Z,13E)-eicosatetraenoyl-alanine. It catalyses the reaction N-(5Z,8Z,11Z,14Z)-eicosatetraenoyl-L-alanine + O2 = N-(12S)-hydroperoxy-(5Z,8Z,10E,14Z)-eicosatetraenoyl-alanine. It carries out the reaction N-(5Z,8Z,11Z,14Z)-eicosatetraenoyl-gamma-aminobutanoate + O2 = N-(15S)-hydroperoxy-(5Z,8Z,11Z,13E)-eicosatetraenoyl-gamma-aminobutanoate. The catalysed reaction is N-(5Z,8Z,11Z,14Z)-eicosatetraenoyl-gamma-aminobutanoate + O2 = N-(12S)-hydroperoxy-(5Z,8Z,10E,14Z)-eicosatetraenoyl-gamma-aminobutanoate. The enzyme catalyses N-(5Z,8Z,11Z,14Z)-eicosatetraenoyl-glycine + O2 = N-(15S)-hydroperoxy-(5Z,8Z,11Z,13E)-eicosatetraenoyl-glycine. It catalyses the reaction N-(5Z,8Z,11Z,14Z)-eicosatetraenoyl-glycine + O2 = N-(12S)-hydroperoxy-(5Z,8Z,10E,14Z)-eicosatetraenoyl-glycine. It carries out the reaction N-(5Z,8Z,11Z,14Z)-eicosatetraenoyl-taurine + O2 = N-(12S)-hydroperoxy-(5Z,8Z,10E,14Z)-eicosatetraenoyl-taurine. The catalysed reaction is N-(5Z,8Z,11Z,14Z)-eicosatetraenoyl-taurine + O2 = N-(15S)-hydroperoxy-(5Z,8Z,11Z,13E)-eicosatetraenoyl-taurine. The enzyme catalyses (4Z,7Z,10Z,13Z,16Z,19Z)-docosahexaenoate + O2 = (14S)-hydroperoxy-(4Z,7Z,10Z,12E,16Z,19Z)-docosahexaenoate. It catalyses the reaction (7S)-hydroperoxy-(4Z,8E,10Z,13Z,16Z,19Z)-docosahexaenoate + O2 = (7S,14S)-dihydroperoxy-(4Z,8E,10Z,12E,16Z,19Z)-docosahexaenoate. It carries out the reaction (7S)-hydroperoxy-(4Z,8E,10Z,13Z,16Z,19Z)-docosahexaenoate + O2 = (7S,17S)-dihydroperoxy-(4Z,8E,10Z,13Z,15E,19Z)-docosahexaenoate. The catalysed reaction is (5Z,8Z,11Z,14Z,17Z)-eicosapentaenoate + O2 = (12S)-hydroperoxy-(5Z,8Z,10E,14Z,17Z)-eicosapentaenoate. The enzyme catalyses (8Z,11Z,14Z)-eicosatrienoate + O2 = (12S)-hydroperoxy-(8Z,10E,14Z)-eicosatrienoate. It catalyses the reaction (9Z,12Z)-octadecadienoate + O2 = (13S)-hydroperoxy-(9Z,11E)-octadecadienoate. It carries out the reaction (5Z,8Z,11Z)-eicosatrienoate + O2 = (12S)-hydroperoxy-(5Z,8Z,10E)-eicosatrienoate. The catalysed reaction is (14R,15S)-epoxy-(5Z,8Z,11Z)-eicosatrienoate + O2 = (12S)-hydroperoxy-(14R,15S)-epoxy-(5Z,8Z,10E)-eicosatrienoate. The enzyme catalyses (14S,15R)-epoxy-(5Z,8Z,11Z)-eicosatrienoate + O2 = (12S)-hydroperoxy-(14S,15R)-epoxy-(5Z,8Z,10E)-eicosatrienoate. The protein operates within lipid metabolism; hydroperoxy eicosatetraenoic acid biosynthesis. Activated by EGF. Arachidonic acid conversion is inhibited by (13S,14S)-epoxy-(4Z,7Z,9E,11E,16Z,19Z)-docosahexaenoate (13S,14S-epoxy-DHA). Arachidonate 12-lipoxygenase activity is decreased when PH decreases from 7.4 to 6. Catalyzes the regio and stereo-specific incorporation of molecular oxygen into free and esterified polyunsaturated fatty acids generating lipid hydroperoxides that can be further reduced to the corresponding hydroxy species. Mainly converts arachidonate ((5Z,8Z,11Z,14Z)-eicosatetraenoate) to the specific bioactive lipid (12S)-hydroperoxyeicosatetraenoate/(12S)-HPETE. Through the production of bioactive lipids like (12S)-HPETE it regulates different biological processes including platelet activation. It can also catalyze the epoxidation of double bonds of polyunsaturated fatty acids such as (14S)-hydroperoxy-docosahexaenoate/(14S)-HPDHA resulting in the formation of (13S,14S)-epoxy-DHA. Furthermore, it may participate in the sequential oxidations of DHA ((4Z,7Z,10Z,13Z,16Z,19Z)-docosahexaenoate) to generate specialized pro-resolving mediators (SPMs) like resolvin D5 ((7S,17S)-diHPDHA) and (7S,14S)-diHPDHA, that actively down-regulate the immune response and have anti-aggregation properties with platelets. An additional function involves a multistep process by which it transforms leukotriene A4/LTA4 into the bioactive lipids lipoxin A4/LXA4 and lipoxin B4/LXB4, both are vasoactive and LXA4 may regulate neutrophil function via occupancy of specific recognition sites. Can also peroxidize linoleate ((9Z,12Z)-octadecadienoate) to (13S)-hydroperoxyoctadecadienoate/ (13S-HPODE). Due to its role in regulating both the expression of the vascular endothelial growth factor (VEGF, an angiogenic factor involved in the survival and metastasis of solid tumors) and the expression of integrin beta-1 (known to affect tumor cell migration and proliferation), it can be regarded as protumorigenic. Important for cell survival, as it may play a role not only in proliferation but also in the prevention of apoptosis in vascular smooth muscle cells. The sequence is that of Polyunsaturated fatty acid lipoxygenase ALOX12 from Homo sapiens (Human).